Consider the following 465-residue polypeptide: Macrophage metalloelastase (465 aa).

Residues 1–21 (MKFLLVLVLLVSLQVSACGAA) form the signal peptide. The propeptide at 22–101 (PMNESEFAEW…DVQHLRAVPQ (80 aa)) is activation peptide. Residues 86 to 93 (SRCGVPDV) carry the Cysteine switch motif. C88 is a Zn(2+) binding site. Residues D120 and D154 each coordinate Ca(2+). Zn(2+) contacts are provided by H164 and D166. Residues D171, G172, G174, and T176 each coordinate Ca(2+). Residue H179 participates in Zn(2+) binding. G186 and D190 together coordinate Ca(2+). H192 provides a ligand contact to Zn(2+). Ca(2+)-binding residues include D194, E195, and E197. Zn(2+) is bound at residue H214. E215 is a catalytic residue. The Zn(2+) site is built by H218 and H224. C278 and C465 are joined by a disulfide. 4 Hemopexin repeats span residues 281–324 (SLSF…WPTI), 325–371 (PSGI…GFPA), 373–421 (VKKI…FPGI), and 422–465 (RPKI…WFGC). D285 contributes to the Ca(2+) binding site. Residue N313 is glycosylated (N-linked (GlcNAc...) asparagine). D377 and D426 together coordinate Ca(2+).

Belongs to the peptidase M10A family. Requires Ca(2+) as cofactor. The cofactor is Zn(2+).

Its subcellular location is the secreted. It is found in the extracellular space. The protein resides in the extracellular matrix. The enzyme catalyses Hydrolysis of soluble and insoluble elastin. Specific cleavages are also produced at 14-Ala-|-Leu-15 and 16-Tyr-|-Leu-17 in the B chain of insulin.. Its function is as follows. May be involved in tissue injury and remodeling. Has significant elastolytic activity. Can accept large and small amino acids at the P1' site, but has a preference for leucine. Aromatic or hydrophobic residues are preferred at the P1 site, with small hydrophobic residues (preferably alanine) occupying P3. This is Macrophage metalloelastase (Mmp12) from Rattus norvegicus (Rat).